The following is a 629-amino-acid chain: tRNA uridine 5-carboxymethylaminomethyl modification enzyme MnmG (629 aa).

Residues 15–20 (GAGHAG), valine 127, and serine 182 contribute to the FAD site. A disordered region spans residues 203-226 (TPPRVKSSTIDYSKTEEQPGDDHP). The span at 215-226 (SKTEEQPGDDHP) shows a compositional bias: basic and acidic residues. 274 to 288 (GARYCPSIEDKIVRF) contributes to the NAD(+) binding site. An FAD-binding site is contributed by glutamine 371.

It belongs to the MnmG family. As to quaternary structure, homodimer. Heterotetramer of two MnmE and two MnmG subunits. The cofactor is FAD.

It localises to the cytoplasm. NAD-binding protein involved in the addition of a carboxymethylaminomethyl (cmnm) group at the wobble position (U34) of certain tRNAs, forming tRNA-cmnm(5)s(2)U34. This is tRNA uridine 5-carboxymethylaminomethyl modification enzyme MnmG from Listeria monocytogenes serovar 1/2a (strain ATCC BAA-679 / EGD-e).